A 487-amino-acid polypeptide reads, in one-letter code: Phosphoglucosamine mutase (487 aa).

The active-site Phosphoserine intermediate is Ser-134. Positions 134, 277, 279, and 281 each coordinate Mg(2+). Ser-134 carries the phosphoserine modification.

The protein belongs to the phosphohexose mutase family. Requires Mg(2+) as cofactor. Activated by phosphorylation.

It catalyses the reaction alpha-D-glucosamine 1-phosphate = D-glucosamine 6-phosphate. Functionally, catalyzes the conversion of glucosamine-6-phosphate to glucosamine-1-phosphate. The chain is Phosphoglucosamine mutase from Gloeothece citriformis (strain PCC 7424) (Cyanothece sp. (strain PCC 7424)).